The primary structure comprises 484 residues: Phosphomethylpyrimidine synthase (484 aa).

Substrate is bound by residues Asn97, Met126, Tyr156, His192, 212-214, 253-256, and Glu292; these read SRG and DSLR. Position 296 (His296) interacts with Zn(2+). Tyr319 is a binding site for substrate. Residue His360 participates in Zn(2+) binding. Residues Cys440, Cys443, and Cys448 each contribute to the [4Fe-4S] cluster site.

Belongs to the ThiC family. [4Fe-4S] cluster serves as cofactor.

It carries out the reaction 5-amino-1-(5-phospho-beta-D-ribosyl)imidazole + S-adenosyl-L-methionine = 4-amino-2-methyl-5-(phosphooxymethyl)pyrimidine + CO + 5'-deoxyadenosine + formate + L-methionine + 3 H(+). Its pathway is cofactor biosynthesis; thiamine diphosphate biosynthesis. In terms of biological role, catalyzes the synthesis of the hydroxymethylpyrimidine phosphate (HMP-P) moiety of thiamine from aminoimidazole ribotide (AIR) in a radical S-adenosyl-L-methionine (SAM)-dependent reaction. This is Phosphomethylpyrimidine synthase from Synechococcus sp. (strain CC9605).